Consider the following 198-residue polypeptide: Crinkler effector protein BLC01 (198 aa).

Residues 1-15 (MMVKLICAIVDIAGA) form the signal peptide. Residues 16-55 (AFPIDIDTNELVGDFKKVIKAENSRTIACDANDLRLFLAK) are LQLFLAK domain. Residues 56–113 (TDGRWLTEFEVQNGVADISVFEELDVVGAPLNMIGLSEETVSSVAITKELVKAKKTPL) are DWL domain. Residues 114–119 (HVLVVP) carry the HVLVXXP motif motif.

It belongs to the Crinkler effector family.

It is found in the secreted. Its subcellular location is the host cell. Its function is as follows. Secreted effector that elicits necrosis in host plants, a characteristic of plant innate immunity. This chain is Crinkler effector protein BLC01, found in Bremia lactucae (Lettuce downy mildew).